Here is a 270-residue protein sequence, read N- to C-terminus: Putative postmeiotic segregation increased 2-like protein 11 (270 aa).

The protein belongs to the DNA mismatch repair MutL/HexB family.

The chain is Putative postmeiotic segregation increased 2-like protein 11 (PMS2P11) from Homo sapiens (Human).